Consider the following 354-residue polypeptide: Rhodopsin (354 aa).

Over 1–36 the chain is Extracellular; sequence MNGTEGPYFYVPMVNTTGIVRSPYEYPQYYLVSPAA. N-linked (GlcNAc...) asparagine glycans are attached at residues Asn2 and Asn15. The helical transmembrane segment at 37 to 61 threads the bilayer; it reads YACLGAYMFFLILVGFPINFLTLYV. Topologically, residues 62–73 are cytoplasmic; it reads TIEHKKLRTPLN. A helical membrane pass occupies residues 74-96; it reads YILLNLAVADLFMVFGGFTTTIY. Residues 97 to 110 are Extracellular-facing; sequence TSMHGYFVLGRLGC. Cys110 and Cys187 form a disulfide bridge. Residues 111–133 traverse the membrane as a helical segment; sequence NLEGYFATLGGEIGLWSLVVLAV. Residues 134-136 carry the 'Ionic lock' involved in activated form stabilization motif; the sequence is ERW. Residues 134-152 are Cytoplasmic-facing; that stretch reads ERWLVVCKPISNFRFSENH. Residues 153–173 traverse the membrane as a helical segment; sequence AIMGLVFTWIMANSCAAPPLL. Residues 174–202 lie on the Extracellular side of the membrane; the sequence is GWSRYIPEGMQCSCGVDYYTRAEGFNNES. A helical transmembrane segment spans residues 203 to 224; it reads FVIYMFICHFCIPLIVVFFCYG. The Cytoplasmic portion of the chain corresponds to 225–252; it reads RLLCAVKEAAAAQQESETTQRAEREVTR. The chain crosses the membrane as a helical span at residues 253 to 274; it reads MVVIMVIGFLVCWIPYASVAWY. Residues 275–286 are Extracellular-facing; it reads IFTHQGSEFGPL. A helical transmembrane segment spans residues 287–308; it reads FMTVPAFFAKSASIYNPLIYIC. Lys296 carries the N6-(retinylidene)lysine modification. At 309 to 354 the chain is on the cytoplasmic side; the sequence is MNKQFRHCMITTLCCGKNPFEEEEGASTTASKTEASSVSSSSVSPA. S-palmitoyl cysteine attachment occurs at residues Cys322 and Cys323. A disordered region spans residues 333–354; the sequence is GASTTASKTEASSVSSSSVSPA. The segment covering 334–354 has biased composition (low complexity); sequence ASTTASKTEASSVSSSSVSPA.

Belongs to the G-protein coupled receptor 1 family. Opsin subfamily. In terms of processing, phosphorylated on some or all of the serine and threonine residues present in the C-terminal region. Contains one covalently linked retinal chromophore.

It is found in the membrane. Its subcellular location is the cell projection. The protein resides in the cilium. The protein localises to the photoreceptor outer segment. Functionally, photoreceptor required for image-forming vision at low light intensity. While most salt water fish species use retinal as chromophore, most freshwater fish use 3-dehydroretinal, or a mixture of retinal and 3-dehydroretinal. Light-induced isomerization of 11-cis to all-trans retinal triggers a conformational change that activates signaling via G-proteins. Subsequent receptor phosphorylation mediates displacement of the bound G-protein alpha subunit by arrestin and terminates signaling. In Poecilia reticulata (Guppy), this protein is Rhodopsin (rho).